Reading from the N-terminus, the 312-residue chain is Telomere-binding protein OPG077 (312 aa).

This sequence belongs to the orthopoxvirus OPG077 family.

The protein resides in the virion. Its function is as follows. DNA-binding protein which binds to the hairpin form of the viral telomeric sequence. Required for the production of mature virions (MV). In Vaccinia virus (strain L-IVP) (VACV), this protein is Telomere-binding protein OPG077 (OPG077).